A 315-amino-acid chain; its full sequence is Protein-L-isoaspartate O-methyltransferase (315 aa).

2 disordered regions span residues 1–47 (MSGE…KPAA) and 59–89 (RALP…AAPK). The segment covering 14-34 (EDLKRAPRKSEVRSGSGERHA) has biased composition (basic and acidic residues). Composition is skewed to low complexity over residues 35-47 (ASAV…KPAA) and 59-81 (RALP…LKPA). Residue Ser162 is part of the active site.

This sequence belongs to the methyltransferase superfamily. L-isoaspartyl/D-aspartyl protein methyltransferase family.

Its subcellular location is the cytoplasm. The enzyme catalyses [protein]-L-isoaspartate + S-adenosyl-L-methionine = [protein]-L-isoaspartate alpha-methyl ester + S-adenosyl-L-homocysteine. Its function is as follows. Catalyzes the methyl esterification of L-isoaspartyl residues in peptides and proteins that result from spontaneous decomposition of normal L-aspartyl and L-asparaginyl residues. It plays a role in the repair and/or degradation of damaged proteins. The sequence is that of Protein-L-isoaspartate O-methyltransferase from Burkholderia ambifaria (strain MC40-6).